Here is a 388-residue protein sequence, read N- to C-terminus: Succinate--CoA ligase [ADP-forming] subunit beta (388 aa).

The ATP-grasp domain occupies 9-244 (KQLFAEYGLP…PSQDDPREAH (236 aa)). Residues Lys46, 53–55 (GRG), Glu99, Thr102, and Glu107 contribute to the ATP site. The Mg(2+) site is built by Asn199 and Asp213. Residues Asn264 and 321–323 (GIV) contribute to the substrate site.

It belongs to the succinate/malate CoA ligase beta subunit family. Heterotetramer of two alpha and two beta subunits. It depends on Mg(2+) as a cofactor.

It catalyses the reaction succinate + ATP + CoA = succinyl-CoA + ADP + phosphate. The enzyme catalyses GTP + succinate + CoA = succinyl-CoA + GDP + phosphate. The protein operates within carbohydrate metabolism; tricarboxylic acid cycle; succinate from succinyl-CoA (ligase route): step 1/1. Its function is as follows. Succinyl-CoA synthetase functions in the citric acid cycle (TCA), coupling the hydrolysis of succinyl-CoA to the synthesis of either ATP or GTP and thus represents the only step of substrate-level phosphorylation in the TCA. The beta subunit provides nucleotide specificity of the enzyme and binds the substrate succinate, while the binding sites for coenzyme A and phosphate are found in the alpha subunit. This is Succinate--CoA ligase [ADP-forming] subunit beta from Stutzerimonas stutzeri (strain A1501) (Pseudomonas stutzeri).